A 235-amino-acid chain; its full sequence is Large ribosomal subunit protein uL1 (235 aa).

It belongs to the universal ribosomal protein uL1 family. Part of the 50S ribosomal subunit.

Binds directly to 23S rRNA. The L1 stalk is quite mobile in the ribosome, and is involved in E site tRNA release. Its function is as follows. Protein L1 is also a translational repressor protein, it controls the translation of the L11 operon by binding to its mRNA. This Desulfotalea psychrophila (strain LSv54 / DSM 12343) protein is Large ribosomal subunit protein uL1.